We begin with the raw amino-acid sequence, 115 residues long: MAKYSSKINKIRTFALSLVFIGFIIMYVGVFFRSSVLLMSVFMILGVLSILLSTAVYFWIGMLSTKAVQVVCPNCEKPTKILGRVDMCMHCREPLTLDKNLEGKEFNESYNRKSQ.

Helical transmembrane passes span 18 to 38 and 41 to 61; these read LVFI…SVLL and VFMI…FWIG.

This sequence belongs to the UPF0295 family.

It is found in the cell membrane. This chain is UPF0295 protein BLi00901/BL05075, found in Bacillus licheniformis (strain ATCC 14580 / DSM 13 / JCM 2505 / CCUG 7422 / NBRC 12200 / NCIMB 9375 / NCTC 10341 / NRRL NRS-1264 / Gibson 46).